The following is a 747-amino-acid chain: Endoglucanase D (747 aa).

The first 39 residues, 1-39 (MHSASRTRARTRVRTAVSGLLAATVLAAPLTLVAAPAQA), serve as a signal peptide directing secretion. Glutamate 208 functions as the Proton donor in the catalytic mechanism. Residue glutamate 349 is the Nucleophile of the active site. Residues 456 to 475 (APTGLRAGTPTASTVPLTWS) are disordered. Fibronectin type-III domains are found at residues 456-543 (APTG…TAAG) and 552-639 (VPTG…TAPD). A compositionally biased stretch (polar residues) spans 465-475 (PTASTVPLTWS). The CBM2 domain maps to 638–747 (PDPTTGSCAV…TVGGATCTTR (110 aa)).

This sequence belongs to the glycosyl hydrolase 5 (cellulase A) family.

It carries out the reaction Endohydrolysis of (1-&gt;4)-beta-D-glucosidic linkages in cellulose, lichenin and cereal beta-D-glucans.. The protein operates within glycan metabolism; cellulose degradation. This chain is Endoglucanase D (cenD), found in Cellulomonas fimi.